The primary structure comprises 289 residues: Heterokaryon incompatibility protein s (289 aa).

The globular domain stretch occupies residues 1–227 (MSEPFGIVAG…KIDAIVGRNS (227 aa)). The prion domain (PrD) stretch occupies residues 218 to 289 (KIDAIVGRNS…EYGGKGFWDN (72 aa)).

As to quaternary structure, homodimer. Forms heterodimers with het-S.

It localises to the cytoplasm. Functionally, responsible for heterokaryon incompatibility, a process that ensures that during spontaneous, vegetative cell fusion only compatible cells from the same colony survive (non-self-recognition). Forms a prion for the non-Mendelian trait [het-s]. Interacts with het-S from incompatible cells to trigger a lethal reaction that prevents the formation of viable heterokaryons. It is unknown if the native, soluble protein has a cellular function. The chain is Heterokaryon incompatibility protein s (het-s) from Podospora anserina (Pleurage anserina).